Reading from the N-terminus, the 79-residue chain is Cytochrome c oxidase subunit 7A1, mitochondrial (79 aa).

The N-terminal 21 residues, 1 to 21 (MQALRVSRALIRSFNTTARNR), are a transit peptide targeting the mitochondrion. Residues 22–46 (FQNRVPEKQKLFQEDNDIPLYLKGG) lie on the Mitochondrial matrix side of the membrane. A helical transmembrane segment spans residues 47–75 (IVDNILYRVTMGLCLGGSAYSMYCLGWAS). Over 76-79 (FPRN) the chain is Mitochondrial intermembrane.

This sequence belongs to the cytochrome c oxidase VIIa family. Component of the complex IV (CIV, cytochrome c oxidase), a multisubunit enzyme composed of 14 subunits. The complex is composed of a catalytic core of 3 subunits MT-CO1, MT-CO2 and MT-CO3, encoded in the mitochondrial DNA, and 11 supernumerary subunits COX4I1 (or COX4I2), COX5A, COX5B, COX6A2 (or COX6A1), COX6B1 (or COX6B2), COX6C, COX7A1 (or COX7A2), COX7B, COX7C, COX8B and NDUFA4, which are encoded in the nuclear genome. The complex exists as a monomer or a dimer and forms supercomplexes (SCs) in the inner mitochondrial membrane with NADH-ubiquinone oxidoreductase (complex I, CI) and ubiquinol-cytochrome c oxidoreductase (cytochrome b-c1 complex, complex III, CIII), resulting in different assemblies (supercomplex SCI(1)III(2)IV(1) and megacomplex MCI(2)III(2)IV(2)).

Its subcellular location is the mitochondrion inner membrane. The protein operates within energy metabolism; oxidative phosphorylation. Component of the mitochondrial respiratory complex IV (CIV, also named cytochrome c oxidase complex), the last enzyme in the mitochondrial electron transport chain which drives oxidative phosphorylation. The CIV complex is the component of the respiratory chain that catalyzes the reduction of oxygen to water. Acts as an assembly factor that specifically drives the homodimerization of CIV complexes, mediating the formation of mitochondrial respiratory supercomplexes (respirasomes) containing two CIV: supercomplxes with two molecules of CIV show improved activity. Despite being highly expressed in brown adipose tissue, not required for thermogenesis. This Trachypithecus cristatus (Silvered leaf-monkey) protein is Cytochrome c oxidase subunit 7A1, mitochondrial (COX7A1).